The chain runs to 319 residues: Malate dehydrogenase (319 aa).

Residues 10–15 and Asp-34 each bind NAD(+); that span reads GAGNIG. Positions 83 and 89 each coordinate substrate. Residues Asn-96 and 119–121 contribute to the NAD(+) site; that span reads ITN. 2 residues coordinate substrate: Asn-121 and Arg-152. His-176 serves as the catalytic Proton acceptor.

This sequence belongs to the LDH/MDH superfamily. MDH type 3 family.

It catalyses the reaction (S)-malate + NAD(+) = oxaloacetate + NADH + H(+). In terms of biological role, catalyzes the reversible oxidation of malate to oxaloacetate. This chain is Malate dehydrogenase, found in Francisella philomiragia subsp. philomiragia (strain ATCC 25017 / CCUG 19701 / FSC 153 / O#319-036).